The sequence spans 40 residues: RapK inhibitor (40 aa).

2 consecutive propeptides follow at residues methionine 1–alanine 34 and glycine 40.

The protein belongs to the Phr family. Contains a predicted signal peptide cleavage site in the N-terminal region, however the propeptide is probably only subject to processing events at the ends of the mature peptide.

The protein resides in the secreted. The protein localises to the cytoplasm. In terms of biological role, signaling molecule involved in the regulation of genetic competence development. Secreted during production, but the mature peptide acts intracellularly, indicating that it needs to be imported into the cell to function. Stimulates expression of the genes controlled by ComA, a transcriptional factor that regulates the development of genetic competence. Acts by inhibiting RapK, which regulates the activity of ComA. This chain is RapK inhibitor (phrK), found in Bacillus subtilis (strain 168).